An 891-amino-acid chain; its full sequence is Kinesin-like protein KIN-UB (891 aa).

Residues 1-54 form a disordered region; it reads MSGKVANATPKAAAGKPRLSAAGGGAYRRTSSGPLPSAGGGGGRASSESGVSSR. Positions 45–54 are enriched in low complexity; that stretch reads ASSESGVSSR. One can recognise a Kinesin motor domain in the interval 54-400; it reads RVRVAVRLRP…IMFGQRAMKV (347 aa). 139–146 contacts ATP; sequence GQTGTGKT. The D-BOX signature appears at 370–378; the sequence is RTSLVVTIG. Positions 502-592 form a coiled coil; sequence TSSEVGEVQN…ADETRRSLDR (91 aa). Over residues 586-595 the composition is skewed to basic and acidic residues; it reads TRRSLDRGDG. Positions 586–626 are disordered; the sequence is TRRSLDRGDGSGKIFPGFDSLMSHSRNSQPREQSNGPKPPI. The span at 607–621 shows a compositional bias: polar residues; that stretch reads MSHSRNSQPREQSNG. ARM repeat units follow at residues 623–662, 664–704, 706–746, and 748–787; these read KPPIAKLFEQVGLQKILSLLESEEPDVRVHAVKVVANLAA, EANQ…NLAM, ETNQ…NLCG, and DKLQTRLRGEGGIKALLGMVKCGHPDVLAQVARGIANFAK.

Belongs to the TRAFAC class myosin-kinesin ATPase superfamily. Kinesin family. Ungrouped subfamily.

The protein resides in the cytoplasm. It localises to the cytoskeleton. The sequence is that of Kinesin-like protein KIN-UB from Oryza sativa subsp. japonica (Rice).